The chain runs to 422 residues: ORC1-type DNA replication protein 13 (422 aa).

ATP-binding positions include 80-84 (TGKTL), Tyr231, and Arg243.

It belongs to the CDC6/cdc18 family.

Its function is as follows. Involved in regulation of DNA replication. This is ORC1-type DNA replication protein 13 (cdc6m) from Haloarcula marismortui (strain ATCC 43049 / DSM 3752 / JCM 8966 / VKM B-1809) (Halobacterium marismortui).